The sequence spans 500 residues: Probable lipoprotein aminopeptidase LpqL (500 aa).

An N-terminal signal peptide occupies residues 1–24 (MVNKSRMMPAVLAVAVVVAFLTTG). Residue Cys25 is the site of N-palmitoyl cysteine attachment. Residue Cys25 is the site of S-diacylglycerol cysteine attachment. Positions 140 to 231 (VTGPLVAAPA…VTKSVGFQLR (92 aa)) constitute a PA domain. 2 residues coordinate Zn(2+): His271 and Asp283. Catalysis depends on Glu316, which acts as the Proton acceptor. Zn(2+) is bound by residues Glu317, Asp345, and His448.

The protein belongs to the peptidase M28 family. M28A subfamily. Zn(2+) is required as a cofactor. Modified by Lgt on Cys-25 with an S-linked diacylglycerol with a mixture of C16 and C19 fatty acids (palmitic and tuberculostearic acid), signal peptide is removed by LspA, modified by Lnt with an amide-linked mixture of C16 and C19 fatty acids, expressed in M.bovis.

Its subcellular location is the cell membrane. The catalysed reaction is Release of an N-terminal amino acid, Xaa-|-Yaa-, in which Xaa is preferably Leu, but may be other amino acids including Pro although not Arg or Lys, and Yaa may be Pro. Amino acid amides and methyl esters are also readily hydrolyzed, but rates on arylamides are exceedingly low.. In terms of biological role, an aminopeptidase; acts on free N-terminal amino groups with a very strong preference for Leu in the first position. The sequence is that of Probable lipoprotein aminopeptidase LpqL (lpqL) from Mycobacterium tuberculosis (strain ATCC 25618 / H37Rv).